A 266-amino-acid chain; its full sequence is tRNA pseudouridine synthase A (266 aa).

Asp56 acts as the Nucleophile in catalysis. Substrate is bound at residue Tyr110.

The protein belongs to the tRNA pseudouridine synthase TruA family.

It catalyses the reaction uridine(38/39/40) in tRNA = pseudouridine(38/39/40) in tRNA. In terms of biological role, formation of pseudouridine at positions 38, 39 and 40 in the anticodon stem and loop of transfer RNAs. The protein is tRNA pseudouridine synthase A of Halobacterium salinarum (strain ATCC 29341 / DSM 671 / R1).